A 371-amino-acid chain; its full sequence is Putative RNA-binding protein Luc7-like 1 (371 aa).

Coiled-coil stretches lie at residues 87-177 and 220-256; these read MDHL…RNSM and QIRE…EERL. Positions 232-257 are enriched in basic and acidic residues; the sequence is VAEKQEKRNQDRLRRREEREREERLG. A disordered region spans residues 232 to 371; that stretch reads VAEKQEKRNQ…RSEEKEAGEI (140 aa). Residues 258–317 are compositionally biased toward basic residues; it reads RRSGSRTRDRRRSRSRDRRRRRSRSTSRERRKFSRSRSRDRYRRHRSRSRSHSRGHRRAS. Composition is skewed to basic and acidic residues over residues 318-351 and 361-371; these read RDRS…DWRL and RRSEEKEAGEI. Ser-336 and Ser-363 each carry phosphoserine.

This sequence belongs to the Luc7 family.

May bind to RNA via its Arg/Ser-rich domain. The chain is Putative RNA-binding protein Luc7-like 1 (Luc7l) from Mus musculus (Mouse).